Reading from the N-terminus, the 200-residue chain is MSFSPLIRQLIDALRTLPGVGQKTAQRMALQLLERDRSGGTRLAQALSQAMEGVGHCRQCRTLTEDDLCPQCADTRRDDTLLCVVEGPMDVYAVEQTGFRGRYFVLKGHLSPLDGLGPEAIGIPQLMARIEEAGTFTEVILATNPTVEGEATAHYIAQLLQNKGLIASRIAHGVPLGGELELVDGGTLAHSFAGRKPISL.

A C4-type zinc finger spans residues 57 to 72 (CRQCRTLTEDDLCPQC). The region spanning 80–175 (TLLCVVEGPM…IASRIAHGVP (96 aa)) is the Toprim domain.

The protein belongs to the RecR family.

Its function is as follows. May play a role in DNA repair. It seems to be involved in an RecBC-independent recombinational process of DNA repair. It may act with RecF and RecO. The protein is Recombination protein RecR of Pseudomonas fluorescens (strain Pf0-1).